The following is a 510-amino-acid chain: ETS translocation variant 5 (510 aa).

Positions 131–208 (FKPLTPPTTP…QPLQMPKMMP (78 aa)) are disordered. Residues 161 to 174 (GHAPAAGPVQGVGP) show a composition bias toward low complexity. Residues 175–185 (APAPHSLPEPG) are compositionally biased toward pro residues. Residue Ser248 is modified to Phosphoserine. Lys350 is covalently cross-linked (Glycyl lysine isopeptide (Lys-Gly) (interchain with G-Cter in SUMO2)). The segment at residues 368 to 448 (LQLWQFLVTL…AGERYVYKFV (81 aa)) is a DNA-binding region (ETS).

As to quaternary structure, interacts (via C-terminal) with ZMYM5 (via N-terminal 120 amino acid region). In terms of tissue distribution, ubiquitous.

The protein localises to the nucleus. Functionally, binds to DNA sequences containing the consensus nucleotide core sequence 5'-GGAA.-3'. This is ETS translocation variant 5 (ETV5) from Homo sapiens (Human).